Consider the following 690-residue polypeptide: Protein AC23 (690 aa).

Positions 1–37 (MLACKFSQYQAFIMDGVKLLGTCALIILLSTTSTVVG) are cleaved as a signal peptide.

It localises to the virion. Its function is as follows. Pathogenicity factor that accelerates mortality in the host insect. In Autographa californica nuclear polyhedrosis virus (AcMNPV), this protein is Protein AC23.